A 280-amino-acid chain; its full sequence is Threonylcarbamoyl-AMP synthase (280 aa).

The N-terminal 56 residues, 1-56, are a transit peptide targeting the mitochondrion; it reads MSTARPCAGLRAAVAAGMGLSDGPAGSSRGCRLLRPPAPAPALPGARLLRLPESEA. Ser-61 carries the post-translational modification Phosphoserine. One can recognise a YrdC-like domain in the interval 68 to 258; sequence TEALRAAVAE…KFGIIRSGCA (191 aa).

This sequence belongs to the SUA5 family. In terms of assembly, interacts with RSC1A1.

It is found in the cytoplasm. The protein resides in the mitochondrion. The protein localises to the cell membrane. It catalyses the reaction L-threonine + hydrogencarbonate + ATP = L-threonylcarbamoyladenylate + diphosphate + H2O. Cytoplasmic and mitochondrial threonylcarbamoyl-AMP synthase required for the formation of a threonylcarbamoyl group on adenosine at position 37 (t(6)A37) in tRNAs that read codons beginning with adenine. Catalyzes the conversion of L-threonine, HCO(3)(-)/CO(2) and ATP to give threonylcarbamoyl-AMP (TC-AMP) as the acyladenylate intermediate, with the release of diphosphate. Participates in t(6)A37 formation in cytoplasmic and mitochondrial tRNAs. May regulate the activity of some transporters. This Rattus norvegicus (Rat) protein is Threonylcarbamoyl-AMP synthase.